A 98-amino-acid chain; its full sequence is VIGGAECNINEHRSLVLLYYSSRLFGGGTLINKEWVLSAAHCDGENMKIIYXXXXXXXXXXKDRQIRVAKKYFCRDRKKSVIDKDIMLIKKPVNGSTH.

In terms of domain architecture, Peptidase S1 spans 1-98 (VIGGAECNIN…IKKPVNGSTH (98 aa)). Catalysis depends on charge relay system residues histidine 41 and aspartate 85. Asparagine 94 is a glycosylation site (N-linked (GlcNAc...) asparagine).

It belongs to the peptidase S1 family. Snake venom subfamily. Monomer. In terms of tissue distribution, expressed by the venom gland.

The protein localises to the secreted. Its activity is regulated as follows. Inhibited by PMSF. Thrombin-like snake venom serine protease that preferentially cleaves the alpha-chain of fibrinogen (FGA). Induce platelet aggregation in the presence of exogenous fibrinogen. Possesses esterase and amidolytic activities. This Cerastes cerastes (Horned desert viper) protein is Thrombin-like enzyme cerastotin.